We begin with the raw amino-acid sequence, 262 residues long: Catechol O-methyltransferase domain-containing protein 1 (262 aa).

Residues 12 to 32 (AALALGSAALGAAFATGLLLG) form a helical; Signal-anchor for type II membrane protein membrane-spanning segment. S-adenosyl-L-methionine is bound by residues D108, 110 to 111 (GT), S116, E134, V135, A163, D185, D187, and Y194.

This sequence belongs to the class I-like SAM-binding methyltransferase superfamily. Cation-dependent O-methyltransferase family. Homodimer.

The protein resides in the membrane. In terms of biological role, putative O-methyltransferase. This Mus musculus (Mouse) protein is Catechol O-methyltransferase domain-containing protein 1 (Comtd1).